We begin with the raw amino-acid sequence, 388 residues long: Homeobox protein Hox-A13 (388 aa).

Residues 322–381 (GRKKRVPYTKVQLKELEREYATNKFITKDKRRRISATTNLSERQVTIWFQNRRVKEKKVI) constitute a DNA-binding region (homeobox).

Belongs to the Abd-B homeobox family. In terms of assembly, binds DNA as a homodimer. Interacts with MEIS1, MEIS2 and MEIS3.

The protein localises to the nucleus. Functionally, sequence-specific, AT-rich binding transcription factor which is part of a developmental regulatory system that provides cells with specific positional identities on the anterior-posterior axis. In terms of biological role, sequence-specific transcription factor which is part of a developmental regulatory system that provides cells with specific positional identities on the anterior-posterior axis. The polypeptide is Homeobox protein Hox-A13 (HOXA13) (Homo sapiens (Human)).